Consider the following 309-residue polypeptide: Putative F-box protein At4g05475 (309 aa).

Residues 1 to 26 (MATSTTLQSLLMKEDEEQRNKRRTTS) are disordered. The F-box domain maps to 37–84 (RINWVDLPPELTTSILLRLSVTDILDNARKLCRAWRRICKDPSMWRKI).

The polypeptide is Putative F-box protein At4g05475 (Arabidopsis thaliana (Mouse-ear cress)).